Here is a 135-residue protein sequence, read N- to C-terminus: UPF0355 protein SE_2351 (135 aa).

The protein belongs to the UPF0355 family.

The sequence is that of UPF0355 protein SE_2351 from Staphylococcus epidermidis (strain ATCC 12228 / FDA PCI 1200).